The primary structure comprises 381 residues: Flap endonuclease 1 (381 aa).

Positions 1 to 105 (MGVKGLNQLI…GELEKRLLKR (105 aa)) are N-domain. D34 lines the Mg(2+) pocket. Residues R47 and R71 each coordinate DNA. 5 residues coordinate Mg(2+): D87, E159, E161, D180, and D182. The tract at residues 123–254 (EVMKFEKRLV…VTAYKLIKEH (132 aa)) is I-domain. A DNA-binding site is contributed by E159. DNA contacts are provided by G232 and D234. D234 is a Mg(2+) binding site. An interaction with PCNA region spans residues 340–348 (VQGRLDGFF). Residues 354–381 (PGAKAGDKKGDKKRGSDSKASNNKKKRK) form a disordered region. Residues 358-370 (AGDKKGDKKRGSD) are compositionally biased toward basic and acidic residues.

The protein belongs to the XPG/RAD2 endonuclease family. FEN1 subfamily. As to quaternary structure, interacts with PCNA. Three molecules of FEN1 bind to one PCNA trimer with each molecule binding to one PCNA monomer. PCNA stimulates the nuclease activity without altering cleavage specificity. Requires Mg(2+) as cofactor. In terms of processing, phosphorylated. Phosphorylation upon DNA damage induces relocalization to the nuclear plasma.

It localises to the nucleus. The protein resides in the nucleolus. It is found in the nucleoplasm. Its subcellular location is the mitochondrion. In terms of biological role, structure-specific nuclease with 5'-flap endonuclease and 5'-3' exonuclease activities involved in DNA replication and repair. During DNA replication, cleaves the 5'-overhanging flap structure that is generated by displacement synthesis when DNA polymerase encounters the 5'-end of a downstream Okazaki fragment. It enters the flap from the 5'-end and then tracks to cleave the flap base, leaving a nick for ligation. Also involved in the long patch base excision repair (LP-BER) pathway, by cleaving within the apurinic/apyrimidinic (AP) site-terminated flap. Acts as a genome stabilization factor that prevents flaps from equilibrating into structures that lead to duplications and deletions. Also possesses 5'-3' exonuclease activity on nicked or gapped double-stranded DNA, and exhibits RNase H activity. Also involved in replication and repair of rDNA and in repairing mitochondrial DNA. This is Flap endonuclease 1 from Scheffersomyces stipitis (strain ATCC 58785 / CBS 6054 / NBRC 10063 / NRRL Y-11545) (Yeast).